A 274-amino-acid polypeptide reads, in one-letter code: Penicillin-insensitive murein endopeptidase (274 aa).

The signal sequence occupies residues 1-19; that stretch reads MNKTAIALLALLASSASLA. Disulfide bonds link C44–C265, C187–C235, and C216–C223. Residues H110, H113, D120, D147, H150, and H211 each contribute to the Zn(2+) site. The interval 228-265 is disordered; it reads LPPPGDGCGAELQSWFAPPKPGTTKPEKKTPPPLPPSC.

This sequence belongs to the peptidase M74 family. In terms of assembly, dimer. Requires Zn(2+) as cofactor.

The protein resides in the periplasm. Functionally, murein endopeptidase that cleaves the D-alanyl-meso-2,6-diamino-pimelyl amide bond that connects peptidoglycan strands. Likely plays a role in the removal of murein from the sacculus. This is Penicillin-insensitive murein endopeptidase from Shigella boydii serotype 18 (strain CDC 3083-94 / BS512).